Reading from the N-terminus, the 1040-residue chain is Multidrug resistance protein MdtB (1040 aa).

The next 12 helical transmembrane spans lie at 16 to 36, 347 to 367, 369 to 389, 396 to 416, 440 to 460, 472 to 492, 537 to 557, 863 to 883, 888 to 908, 911 to 931, 968 to 988, and 998 to 1018; these read FIMR…AGII, LMMA…NIPA, IIPG…MVFL, LTLM…IVVI, IGFT…PLLF, FAIT…TLTP, WLTL…WVFI, LGST…VLGI, FIHP…ALLA, IAGS…IGIV, ILMT…STGV, and IGMV…TPVI.

It belongs to the resistance-nodulation-cell division (RND) (TC 2.A.6) family. MdtB subfamily. Part of a tripartite efflux system composed of MdtA, MdtB and MdtC. MdtB forms a heteromultimer with MdtC.

The protein localises to the cell inner membrane. In terms of biological role, the MdtABC tripartite complex confers resistance against novobiocin and deoxycholate. This is Multidrug resistance protein MdtB from Escherichia fergusonii (strain ATCC 35469 / DSM 13698 / CCUG 18766 / IAM 14443 / JCM 21226 / LMG 7866 / NBRC 102419 / NCTC 12128 / CDC 0568-73).